The chain runs to 152 residues: Protein-export protein SecB (152 aa).

This sequence belongs to the SecB family. Homotetramer, a dimer of dimers. One homotetramer interacts with 1 SecA dimer.

The protein localises to the cytoplasm. In terms of biological role, one of the proteins required for the normal export of preproteins out of the cell cytoplasm. It is a molecular chaperone that binds to a subset of precursor proteins, maintaining them in a translocation-competent state. It also specifically binds to its receptor SecA. The sequence is that of Protein-export protein SecB from Verminephrobacter eiseniae (strain EF01-2).